We begin with the raw amino-acid sequence, 167 residues long: Transcription antitermination protein NusB (167 aa).

The interval 1-32 (MSDTPETGKPAAGTKPAARTEAKAPPKSARRR) is disordered.

It belongs to the NusB family.

Involved in transcription antitermination. Required for transcription of ribosomal RNA (rRNA) genes. Binds specifically to the boxA antiterminator sequence of the ribosomal RNA (rrn) operons. The chain is Transcription antitermination protein NusB from Cupriavidus pinatubonensis (strain JMP 134 / LMG 1197) (Cupriavidus necator (strain JMP 134)).